Consider the following 386-residue polypeptide: S-adenosylmethionine synthase (386 aa).

H14 contacts ATP. Residue D16 coordinates Mg(2+). E42 contributes to the K(+) binding site. The L-methionine site is built by E55 and Q98. The segment at 98-108 (QSGDISQGVDG) is flexible loop. ATP contacts are provided by residues 162–164 (DSK), 230–231 (RF), D239, 245–246 (RK), A262, and K266. D239 lines the L-methionine pocket. Residue K270 coordinates L-methionine.

This sequence belongs to the AdoMet synthase family. Homotetramer; dimer of dimers. The cofactor is Mg(2+). Requires K(+) as cofactor.

The protein resides in the cytoplasm. The enzyme catalyses L-methionine + ATP + H2O = S-adenosyl-L-methionine + phosphate + diphosphate. It functions in the pathway amino-acid biosynthesis; S-adenosyl-L-methionine biosynthesis; S-adenosyl-L-methionine from L-methionine: step 1/1. Catalyzes the formation of S-adenosylmethionine (AdoMet) from methionine and ATP. The overall synthetic reaction is composed of two sequential steps, AdoMet formation and the subsequent tripolyphosphate hydrolysis which occurs prior to release of AdoMet from the enzyme. This chain is S-adenosylmethionine synthase, found in Salinibacter ruber (strain DSM 13855 / M31).